The sequence spans 219 residues: Cytidylate kinase (219 aa).

An ATP-binding site is contributed by 21 to 29; the sequence is GPAASGKGT.

It belongs to the cytidylate kinase family. Type 1 subfamily.

It localises to the cytoplasm. It catalyses the reaction CMP + ATP = CDP + ADP. The enzyme catalyses dCMP + ATP = dCDP + ADP. This is Cytidylate kinase from Rickettsia prowazekii (strain Madrid E).